We begin with the raw amino-acid sequence, 221 residues long: Pyridoxal phosphate homeostasis protein (221 aa).

Lys-26 is subject to N6-(pyridoxal phosphate)lysine.

This sequence belongs to the pyridoxal phosphate-binding protein YggS/PROSC family.

Its function is as follows. Pyridoxal 5'-phosphate (PLP)-binding protein, which is involved in PLP homeostasis. The sequence is that of Pyridoxal phosphate homeostasis protein from Corynebacterium glutamicum (strain ATCC 13032 / DSM 20300 / JCM 1318 / BCRC 11384 / CCUG 27702 / LMG 3730 / NBRC 12168 / NCIMB 10025 / NRRL B-2784 / 534).